Reading from the N-terminus, the 453-residue chain is GTPase Der (453 aa).

EngA-type G domains are found at residues 3 to 178 (PKIA…PNNE) and 190 to 363 (LKLA…LECS). GTP is bound by residues 9–16 (GRPNVGKS), 57–61 (DTGGV), 130–133 (NKVD), 196–203 (GRPNAGKS), 243–247 (DTAGI), and 308–311 (NKTD). The 85-residue stretch at 364–448 (TRINTGVLNR…PIRIRLRSSH (85 aa)) folds into the KH-like domain.

Belongs to the TRAFAC class TrmE-Era-EngA-EngB-Septin-like GTPase superfamily. EngA (Der) GTPase family. Associates with the 50S ribosomal subunit.

In terms of biological role, GTPase that plays an essential role in the late steps of ribosome biogenesis. This Lawsonia intracellularis (strain PHE/MN1-00) protein is GTPase Der.